A 565-amino-acid polypeptide reads, in one-letter code: Sulfite reductase [NADPH] hemoprotein beta-component (565 aa).

[4Fe-4S] cluster is bound by residues Cys429, Cys435, Cys474, and Cys478. Cys478 contributes to the siroheme binding site.

It belongs to the nitrite and sulfite reductase 4Fe-4S domain family. As to quaternary structure, alpha(8)-beta(8). The alpha component is a flavoprotein, the beta component is a hemoprotein. It depends on siroheme as a cofactor. [4Fe-4S] cluster is required as a cofactor.

It carries out the reaction hydrogen sulfide + 3 NADP(+) + 3 H2O = sulfite + 3 NADPH + 4 H(+). Its pathway is sulfur metabolism; hydrogen sulfide biosynthesis; hydrogen sulfide from sulfite (NADPH route): step 1/1. In terms of biological role, component of the sulfite reductase complex that catalyzes the 6-electron reduction of sulfite to sulfide. This is one of several activities required for the biosynthesis of L-cysteine from sulfate. This chain is Sulfite reductase [NADPH] hemoprotein beta-component, found in Shewanella baltica (strain OS155 / ATCC BAA-1091).